Consider the following 207-residue polypeptide: Serotonin N-acetyltransferase (207 aa).

The tract at residues 1–28 is disordered; the sequence is MSTQSTHPLKPEAPRLPPGIPESPSCQR. Thr-31 bears the Phosphothreonine; by PKA mark. The N-acetyltransferase domain occupies 35–194; that stretch reads SEFRCLTPED…SLTFMELHCS (160 aa). Leu-124 serves as a coordination point for substrate. Acetyl-CoA-binding positions include 124–126 and 132–137; these read LAV and QQGRGP. Met-159 serves as a coordination point for substrate. 168–170 is an acetyl-CoA binding site; the sequence is YER. Ser-205 is modified (phosphoserine).

It belongs to the acetyltransferase family. AANAT subfamily. As to quaternary structure, monomer. Interacts with several 14-3-3 proteins, including YWHAB, YWHAE, YWHAG and YWHAZ, preferentially when phosphorylated at Thr-31. Phosphorylation on Ser-205 also allows binding to YWHAZ, but with lower affinity. The interaction with YWHAZ considerably increases affinity for arylalkylamines and acetyl-CoA and protects the enzyme from dephosphorylation and proteasomal degradation. It may also prevent thiol-dependent inactivation. CAMP-dependent phosphorylation on both N-terminal Thr-31 and C-terminal Ser-205 regulates AANAT activity by promoting interaction with 14-3-3 proteins. As to expression, highly expressed in pineal gland and at lower levels in the retina. Weak expression in several brain regions and in the pituitary gland.

Its subcellular location is the cytoplasm. The catalysed reaction is a 2-arylethylamine + acetyl-CoA = an N-acetyl-2-arylethylamine + CoA + H(+). It functions in the pathway aromatic compound metabolism; melatonin biosynthesis; melatonin from serotonin: step 1/2. Functionally, controls the night/day rhythm of melatonin production in the pineal gland. Catalyzes the N-acetylation of serotonin into N-acetylserotonin, the penultimate step in the synthesis of melatonin. This Homo sapiens (Human) protein is Serotonin N-acetyltransferase (AANAT).